A 491-amino-acid polypeptide reads, in one-letter code: Glutamyl-tRNA(Gln) amidotransferase subunit A (491 aa).

Residues K76 and S154 each act as charge relay system in the active site. The Acyl-ester intermediate role is filled by S178.

This sequence belongs to the amidase family. GatA subfamily. Heterotrimer of A, B and C subunits.

The enzyme catalyses L-glutamyl-tRNA(Gln) + L-glutamine + ATP + H2O = L-glutaminyl-tRNA(Gln) + L-glutamate + ADP + phosphate + H(+). Functionally, allows the formation of correctly charged Gln-tRNA(Gln) through the transamidation of misacylated Glu-tRNA(Gln) in organisms which lack glutaminyl-tRNA synthetase. The reaction takes place in the presence of glutamine and ATP through an activated gamma-phospho-Glu-tRNA(Gln). In Cereibacter sphaeroides (strain ATCC 17023 / DSM 158 / JCM 6121 / CCUG 31486 / LMG 2827 / NBRC 12203 / NCIMB 8253 / ATH 2.4.1.) (Rhodobacter sphaeroides), this protein is Glutamyl-tRNA(Gln) amidotransferase subunit A.